A 51-amino-acid chain; its full sequence is Protein Tat (51 aa).

Positions glutamate 1 to serine 25 are enriched in polar residues. The tract at residues glutamate 1–asparagine 51 is disordered. A Glycyl lysine isopeptide (Lys-Gly) (interchain with G-Cter in ubiquitin) cross-link involves residue lysine 21. The Cell attachment site signature appears at arginine 28–aspartate 30. Residues glycine 33–threonine 43 are compositionally biased toward basic and acidic residues.

It belongs to the lentiviruses Tat family. Interacts with host CCNT1. Associates with the P-TEFb complex composed at least of Tat, P-TEFb (CDK9 and CCNT1), TAR RNA, RNA Pol II. Recruits the HATs CREBBP, TAF1/TFIID, EP300, PCAF and GCN5L2. Interacts with host KAT5/Tip60; this interaction targets the latter to degradation. Interacts with the host deacetylase SIRT1. Interacts with host capping enzyme RNGTT; this interaction stimulates RNGTT. Binds to host KDR, and to the host integrins ITGAV/ITGB3 and ITGA5/ITGB1. Interacts with host KPNB1/importin beta-1 without previous binding to KPNA1/importin alpha-1. Interacts with EIF2AK2. Interacts with host nucleosome assembly protein NAP1L1; this interaction may be required for the transport of Tat within the nucleus, since the two proteins interact at the nuclear rim. Interacts with host C1QBP/SF2P32; this interaction involves lysine-acetylated Tat. Interacts with the host chemokine receptors CCR2, CCR3 and CXCR4. Interacts with host DPP4/CD26; this interaction may trigger an anti-proliferative effect. Interacts with host LDLR. Interacts with the host extracellular matrix metalloproteinase MMP1. Interacts with host PRMT6; this interaction mediates Tat's methylation. Interacts with, and is ubiquitinated by MDM2/Hdm2. Interacts with host PSMC3 and HTATIP2. Interacts with STAB1; this interaction may overcome SATB1-mediated repression of IL2 and IL2RA (interleukin) in T cells by binding to the same domain than HDAC1. Interacts (when acetylated) with human CDK13, thereby increasing HIV-1 mRNA splicing and promoting the production of the doubly spliced HIV-1 protein Nef. In terms of processing, acetylation by EP300, CREBBP, GCN5L2/GCN5 and PCAF regulates the transactivation activity of Tat. Phosphorylated by EIF2AK2 on serine and threonine residues adjacent to the basic region important for TAR RNA binding and function. Phosphorylation of Tat by EIF2AK2 is dependent on the prior activation of EIF2AK2 by dsRNA. Post-translationally, asymmetrical arginine methylation by host PRMT6 seems to diminish the transactivation capacity of Tat and affects the interaction with host CCNT1. In terms of processing, polyubiquitination by MDM2 does not target Tat to degradation, but activates its transactivation function and fosters interaction with CCNT1 and TAR RNA.

It localises to the host nucleus. It is found in the host nucleolus. The protein resides in the host cytoplasm. The protein localises to the secreted. Transcriptional activator that increases RNA Pol II processivity, thereby increasing the level of full-length viral transcripts. Recognizes a hairpin structure at the 5'-LTR of the nascent viral mRNAs referred to as the transactivation responsive RNA element (TAR) and recruits the cyclin T1-CDK9 complex (P-TEFb complex) that will in turn hyperphosphorylate the RNA polymerase II to allow efficient elongation. The CDK9 component of P-TEFb and other Tat-activated kinases hyperphosphorylate the C-terminus of RNA Pol II that becomes stabilized and much more processive. Other factors such as HTATSF1/Tat-SF1, SUPT5H/SPT5, and HTATIP2 are also important for Tat's function. Besides its effect on RNA Pol II processivity, Tat induces chromatin remodeling of proviral genes by recruiting the histone acetyltransferases (HATs) CREBBP, EP300 and PCAF to the chromatin. This also contributes to the increase in proviral transcription rate, especially when the provirus integrates in transcriptionally silent region of the host genome. To ensure maximal activation of the LTR, Tat mediates nuclear translocation of NF-kappa-B by interacting with host RELA. Through its interaction with host TBP, Tat may also modulate transcription initiation. Tat can reactivate a latently infected cell by penetrating in it and transactivating its LTR promoter. In the cytoplasm, Tat is thought to act as a translational activator of HIV-1 mRNAs. Functionally, extracellular circulating Tat can be endocytosed by surrounding uninfected cells via the binding to several surface receptors such as CD26, CXCR4, heparan sulfate proteoglycans (HSPG) or LDLR. Neurons are rarely infected, but they internalize Tat via their LDLR. Endosomal low pH allows Tat to cross the endosome membrane to enter the cytosol and eventually further translocate into the nucleus, thereby inducing severe cell dysfunctions ranging from cell activation to cell death. Through its interaction with nuclear HATs, Tat is potentially able to control the acetylation-dependent cellular gene expression. Tat seems to inhibit the HAT activity of KAT5/Tip60 and TAF1, and consequently modify the expression of specific cellular genes. Modulates the expression of many cellular genes involved in cell survival, proliferation or in coding for cytokines (such as IL10) or cytokine receptors. May be involved in the derepression of host interleukin IL2 expression. Mediates the activation of cyclin-dependent kinases and dysregulation of microtubule network. Tat plays a role in T-cell and neurons apoptosis. Tat induced neurotoxicity and apoptosis probably contribute to neuroAIDS. Host extracellular matrix metalloproteinase MMP1 cleaves Tat and decreases Tat's mediated neurotoxicity. Circulating Tat also acts as a chemokine-like and/or growth factor-like molecule that binds to specific receptors on the surface of the cells, affecting many cellular pathways. In the vascular system, Tat binds to ITGAV/ITGB3 and ITGA5/ITGB1 integrins dimers at the surface of endothelial cells and competes with bFGF for heparin-binding sites, leading to an excess of soluble bFGF. Binds to KDR/VEGFR-2. All these Tat-mediated effects enhance angiogenesis in Kaposi's sarcoma lesions. This is Protein Tat from Homo sapiens (Human).